The primary structure comprises 208 residues: Protein GrpE (208 aa).

Residues 1–62 form a disordered region; it reads MTEKDESVKS…ETAVDPKDEE (62 aa). Residues 46-55 are compositionally biased toward acidic residues; that stretch reads SNEESSEETA.

It belongs to the GrpE family. In terms of assembly, homodimer.

It is found in the cytoplasm. Its function is as follows. Participates actively in the response to hyperosmotic and heat shock by preventing the aggregation of stress-denatured proteins, in association with DnaK and GrpE. It is the nucleotide exchange factor for DnaK and may function as a thermosensor. Unfolded proteins bind initially to DnaJ; upon interaction with the DnaJ-bound protein, DnaK hydrolyzes its bound ATP, resulting in the formation of a stable complex. GrpE releases ADP from DnaK; ATP binding to DnaK triggers the release of the substrate protein, thus completing the reaction cycle. Several rounds of ATP-dependent interactions between DnaJ, DnaK and GrpE are required for fully efficient folding. This Staphylococcus haemolyticus (strain JCSC1435) protein is Protein GrpE.